Consider the following 175-residue polypeptide: Cytochrome c-550-like protein (175 aa).

The N-terminal stretch at 1–34 is a signal peptide; sequence MYQPHFWQRSIGWLCGGLLILLLGWTIAPATALA. Positions 81, 84, 85, and 135 each coordinate heme c.

This sequence belongs to the cytochrome c family. PsbV subfamily. Heme c is required as a cofactor.

It is found in the cellular thylakoid membrane. Probable low-potential cytochrome c, can partially replace cytochrome c-550 (PsbV) function. The polypeptide is Cytochrome c-550-like protein (Thermosynechococcus vestitus (strain NIES-2133 / IAM M-273 / BP-1)).